Here is a 654-residue protein sequence, read N- to C-terminus: Acetyl-coenzyme A synthetase (654 aa).

Residues 190-193 and T313 contribute to the CoA site; that span reads RGGK. Residues 389–391, 413–418, D504, and R519 each bind ATP; these read GEP and DTWWQT. S527 is a CoA binding site. Residue R530 coordinates ATP. Mg(2+)-binding residues include V541, H543, and V546. K613 carries the N6-acetyllysine modification.

It belongs to the ATP-dependent AMP-binding enzyme family. Requires Mg(2+) as cofactor. Acetylated. Deacetylation by the SIR2-homolog deacetylase activates the enzyme.

The enzyme catalyses acetate + ATP + CoA = acetyl-CoA + AMP + diphosphate. Catalyzes the conversion of acetate into acetyl-CoA (AcCoA), an essential intermediate at the junction of anabolic and catabolic pathways. AcsA undergoes a two-step reaction. In the first half reaction, AcsA combines acetate with ATP to form acetyl-adenylate (AcAMP) intermediate. In the second half reaction, it can then transfer the acetyl group from AcAMP to the sulfhydryl group of CoA, forming the product AcCoA. The polypeptide is Acetyl-coenzyme A synthetase (Leptospira biflexa serovar Patoc (strain Patoc 1 / Ames)).